Reading from the N-terminus, the 462-residue chain is ATP synthase subunit beta (462 aa).

151-158 (GGAGVGKT) lines the ATP pocket.

Belongs to the ATPase alpha/beta chains family. In terms of assembly, F-type ATPases have 2 components, CF(1) - the catalytic core - and CF(0) - the membrane proton channel. CF(1) has five subunits: alpha(3), beta(3), gamma(1), delta(1), epsilon(1). CF(0) has four main subunits: a(1), b(1), b'(1) and c(9-12).

The protein localises to the cell inner membrane. The enzyme catalyses ATP + H2O + 4 H(+)(in) = ADP + phosphate + 5 H(+)(out). Its function is as follows. Produces ATP from ADP in the presence of a proton gradient across the membrane. The catalytic sites are hosted primarily by the beta subunits. This chain is ATP synthase subunit beta, found in Chlorobium phaeobacteroides (strain DSM 266 / SMG 266 / 2430).